Here is a 416-residue protein sequence, read N- to C-terminus: MAGIVACILLVFVTVITAQQQAVFLEYIQGRMGVLEERLSQWHDQSSRYSGELRDFKNQVLKMLENIEKERESLRNEMENTNVRVDRLEREVDYIETQNPAPPCVEIDEKLTELHDAKKKKKEKYEKITGCPAADIPGKEETDEILIPPVIRKPYCSDTISQVTAMKILKRFGSSAGLWTKDLAGNSDRIYVFDGAGNDTVYVYPRMKEFTLSSSTRKAAKIKLPFPWIGTGHIVYDGNLYYIRQDNEFQVIKFNLANKTIIDSAVLPIEQQVPVYGLSKFNYIDIVADEEGLWVIYATKENEKNICLAKLDPSSLSIEQMWDTPCPIENAESAFVVCGSLYVVYNTKLPSRSRIQCVFDVSGTISSENVPIVYFPKRYGSHSSMKYNPKEKQIYAWDDGYQMLYKLNMKHRDELY.

A signal peptide spans 1–18; that stretch reads MAGIVACILLVFVTVITA. A coiled-coil region spans residues 48 to 129; sequence RYSGELRDFK…KKKEKYEKIT (82 aa). The Olfactomedin-like domain maps to 155-411; the sequence is YCSDTISQVT…QMLYKLNMKH (257 aa). Cys-156 and Cys-338 are joined by a disulfide. Asn-198 and Asn-258 each carry an N-linked (GlcNAc...) asparagine glycan.

This sequence belongs to the OLFML3 family. Interacts (via coiled coil domain) with BMP1 and (via olfactomedin-like domain) CHRD.

It is found in the secreted. In terms of biological role, secreted scaffold protein that plays an essential role in dorsoventral patterning during early development. Stabilizes axial formation by restricting chordin (CHRD) activity on the dorsal side. Acts by facilitating the association between the tolloid protease BMP1 and its substrate chordin (CHRD), leading to enhance chordin (CHRD) degradation by BMP1. The chain is Olfactomedin-like protein 3 (olfml3) from Xenopus tropicalis (Western clawed frog).